A 170-amino-acid chain; its full sequence is Protein ECM34 (170 aa).

N-linked (GlcNAc...) asparagine glycosylation occurs at Asn45. Transmembrane regions (helical) follow at residues 51-71 and 98-118; these read IWLL…GIGG and TIVI…FKMY.

The protein belongs to the DUP/COS family.

It is found in the membrane. Functionally, may be involved in cell wall organization and biogenesis. The protein is Protein ECM34 (ECM34) of Saccharomyces cerevisiae (strain ATCC 204508 / S288c) (Baker's yeast).